The chain runs to 419 residues: Gamma-glutamyl phosphate reductase (419 aa).

The protein belongs to the gamma-glutamyl phosphate reductase family.

It is found in the cytoplasm. The enzyme catalyses L-glutamate 5-semialdehyde + phosphate + NADP(+) = L-glutamyl 5-phosphate + NADPH + H(+). Its pathway is amino-acid biosynthesis; L-proline biosynthesis; L-glutamate 5-semialdehyde from L-glutamate: step 2/2. Functionally, catalyzes the NADPH-dependent reduction of L-glutamate 5-phosphate into L-glutamate 5-semialdehyde and phosphate. The product spontaneously undergoes cyclization to form 1-pyrroline-5-carboxylate. This is Gamma-glutamyl phosphate reductase from Yersinia pestis.